The following is a 348-amino-acid chain: Actin maturation protease (348 aa).

Positions methionine 1 to threonine 18 are enriched in pro residues. Residues methionine 1–phenylalanine 64 form a disordered region. The segment covering asparagine 34–serine 48 has biased composition (low complexity). Positions valine 49–arginine 60 are enriched in pro residues. The interval serine 121–glycine 241 is peptidase C39-like. Residue cysteine 129 is part of the active site. Position 313 is a phosphoserine (serine 313).

This sequence belongs to the ACTMAP family. Interacts (via N-terminus) with PFN2; the interaction may facilitate efficient cleavage of the acetylated N-terminus of immature actin. Interacts with PFN1.

The protein resides in the cytoplasm. It carries out the reaction N-terminal N(alpha)-acetyl-L-methionyl-L-aspartyl-[protein] + H2O = N-terminal L-aspartyl-[protein] + N-acetyl-L-methionine. It catalyses the reaction N-terminal N(alpha)-acetyl-L-methionyl-L-glutamyl-[protein] + H2O = N-terminal L-glutamyl-[protein] + N-acetyl-L-methionine. The catalysed reaction is N-terminal N(alpha)-acetyl-L-cysteinyl-L-aspartyl-[protein] + H2O = N-terminal L-aspartyl-[protein] + N-acetyl-L-cysteine. The enzyme catalyses N-terminal N(alpha)-acetyl-L-cysteinyl-L-glutamyl-[protein] + H2O = N-terminal L-glutamyl-[protein] + N-acetyl-L-cysteine. Functionally, actin maturation protease that specifically mediates the cleavage of immature acetylated N-terminal actin, thereby contributing to actin maturation. Cleaves N-terminal acetylated methionine of immature cytoplasmic beta- and gamma-actins ACTB and ACTG1 after translation. Cleaves N-terminal acetylated cysteine of muscle alpha-actins ACTA1, ACTC1 and ACTA2 after canonical removal of N-terminal methionine. The polypeptide is Actin maturation protease (Bos taurus (Bovine)).